The sequence spans 68 residues: Conotoxin Mi11.1 (68 aa).

The signal sequence occupies residues 1-26; that stretch reads MMLRLTSVSCFLLVIACLNLFQVVLT. 4 cysteine pairs are disulfide-bonded: cysteine 29–cysteine 43, cysteine 36–cysteine 48, cysteine 42–cysteine 52, and cysteine 47–cysteine 56. At tyrosine 60 the chain carries Tyrosine amide. Positions 64–68 are excised as a propeptide; sequence ATFQE.

Belongs to the conotoxin I2 superfamily. In terms of tissue distribution, expressed by the venom duct.

The protein localises to the secreted. The chain is Conotoxin Mi11.1 from Conus miles (Soldier cone).